The chain runs to 243 residues: Orotidine 5'-phosphate decarboxylase (243 aa).

Residues D12, K34, 61 to 70, T125, R187, Q196, G216, and R217 contribute to the substrate site; that span reads DLKFHDIPNT. Catalysis depends on K63, which acts as the Proton donor.

The protein belongs to the OMP decarboxylase family. Type 1 subfamily. In terms of assembly, homodimer.

It carries out the reaction orotidine 5'-phosphate + H(+) = UMP + CO2. It participates in pyrimidine metabolism; UMP biosynthesis via de novo pathway; UMP from orotate: step 2/2. Its function is as follows. Catalyzes the decarboxylation of orotidine 5'-monophosphate (OMP) to uridine 5'-monophosphate (UMP). The sequence is that of Orotidine 5'-phosphate decarboxylase from Heliobacterium modesticaldum (strain ATCC 51547 / Ice1).